The following is a 400-amino-acid chain: MKKSINEQKTIFIILLSNIFVAFLGIGLIIPVMPSFMKIMHLSGSTMGYLVAAFAISQLITSPFAGRWVDRFGRKKMIILGLLIFSLSELIFGLGTHVSIFYFSRILGGVSAAFIMPAVTAYVADITTLKERSKAMGYVSAAISTGFIIGPGAGGFIAGFGIRMPFFFASAIALIAAVTSVFILKESLSIEERHQLSSHTKESNFIKDLKRSIHPVYFIAFIIVFVMAFGLSAYETVFSLFSDHKFGFTPKDIAAIITISSIVAVVIQVLLFGKLVNKLGEKRMIQLCLITGAILAFVSTVMSGFLTVLLVTCFIFLAFDLLRPALTAHLSNMAGNQQGFVAGMNSTYTSLGNIFGPALGGILFDLNIHYPFLFAGFVMIVGLGLTMVWKEKKNDAAALN.

A run of 11 helical transmembrane segments spans residues 11–31 (IFIILLSNIFVAFLGIGLIIP), 46–66 (TMGYLVAAFAISQLITSPFAG), 78–98 (IILGLLIFSLSELIFGLGTHV), 106–126 (ILGGVSAAFIMPAVTAYVADI), 142–162 (AISTGFIIGPGAGGFIAGFGI), 164–184 (MPFFFASAIALIAAVTSVFIL), 213–233 (IHPVYFIAFIIVFVMAFGLSA), 253–273 (IAAIITISSIVAVVIQVLLFG), 297–317 (FVSTVMSGFLTVLLVTCFIFL), 346–366 (STYTSLGNIFGPALGGILFDL), and 368–388 (IHYPFLFAGFVMIVGLGLTMV).

It belongs to the major facilitator superfamily. TCR/Tet family.

Its subcellular location is the cell membrane. In terms of biological role, energy-dependent efflux pump responsible for decreased drug accumulation in multi-drug-resistant cells. Probably uses a transmembrane proton gradient as the energy source. Causes the efflux of a variety of toxic substances, including such structurally diverse compounds as ethidium bromide, rhodamine and acridine dyes, tetraphenylphosphonium, puromycin, chloramphenicol, doxorubicin, and fluoroquinolone antibiotics. This Bacillus subtilis (strain 168) protein is Multidrug resistance protein 2 (blt).